Reading from the N-terminus, the 1004-residue chain is Kinesin-like protein KIN-14R (1004 aa).

Disordered stretches follow at residues 1 to 21, 61 to 90, and 110 to 169; these read MEEE…RIGD, PYVD…MQHD, and ELFS…ATMG. Residues 63–75 are compositionally biased toward acidic residues; that stretch reads VDDDDDGNSEEEN. The span at 115-125 shows a compositional bias: pro residues; the sequence is PSPPQGPPSPS. Coiled-coil stretches lie at residues 189-230 and 266-338; these read CGQL…AQAS and LNDL…LYNK. The Kinesin motor domain maps to 345-671; sequence NIRVFCRCRP…LNFASRVRGI (327 aa). 428–435 contacts ATP; that stretch reads GQTGTGKT. Positions 691–742 form a coiled coil; that stretch reads MAGRAKQDSKNKDAQIKSMEETIQSLEAKNKAKDLLTMNLQEKIKELEAQLL. 2 disordered regions span residues 759-791 and 946-1004; these read DHLH…STAE and SGRR…RQLN. Over residues 948 to 958 the composition is skewed to low complexity; sequence RRAGAGVAGTT. The span at 995–1004 shows a compositional bias: polar residues; sequence NNGTSLRQLN.

It belongs to the TRAFAC class myosin-kinesin ATPase superfamily. Kinesin family. KIN-14 subfamily.

In Oryza sativa subsp. japonica (Rice), this protein is Kinesin-like protein KIN-14R.